The chain runs to 217 residues: Neurotrophic factor BDNF precursor form (217 aa).

A propeptide spanning residues 1 to 108 (PMKEVSIRGQ…AANMSMRVRR (108 aa)) is cleaved from the precursor. N-linked (GlcNAc...) asparagine glycosylation is present at N101. Intrachain disulfides connect C121–C188 and C166–C217.

This sequence belongs to the NGF-beta family.

Its subcellular location is the secreted. Promotes the survival of neuronal populations that are all located either in the central nervous system or directly connected to it. The polypeptide is Neurotrophic factor BDNF precursor form (BDNF) (Acrantophis dumerili (Dumeril's ground boa)).